The sequence spans 809 residues: MSGISLSLRQLDYRDWFQRKISRDIYGNSTWLTGIDLQKELTGHTGCVNTLDWSADGEFLLSGSDDTRLIVWDVFNEYKPRHLISTGHVQNIFSAKFVPYSNNRQILSASGDKLIKLFDLDSSKEGGMDHGMETQTRCWSCALDSVKNIVPCDNGHTFLVCSEDGTARQYDIREPHVCNQDLDCPSILVNYNPYRINLYTITMSPSNPYYFAIGGTHPYAFLYDRRMVKKSFRDDWTMNTSPEKDCRCVRKFSPDGSCNSQGILDRYITCCQFSAANPNELLVSWNSDYVYLFHVHEDKSYTPTFNKIEDSNKKPSKPSLLQTQPLKRKNYSPWYKNNFGASTPASRVSRNPYTAAQPRKHTFYQMYENIEKFFTTENGGLYESIVSGRLSHFSRSIQYVKDAIYFLENYNYIPDSNGLNHSIRVSALRYWRACVSILALMDDTVSLEPNTIIQAGWGWLYDFMNWVTRYLLGISDHWALQMSPPTNVARQNFVLCDPDEPSRVLFSNPSEMIRAFARIDTNDLSSVRRFFWIHKVLRGCLLLISSDIYWEQFQPWDSSTSDVTSSQRLDDENGFLTLLEPPVNYENEVESSSGENIVSMYTGHSDLNDDDDDYQDEESYSYASDDDDESDEDSDEGPTLLSLRMKKRKAVEPNVPVNTHVKSYYGHCNVESIKNVNFYGQNDEYVMSGSDDGRFFIWDKLNASILAIIHGDSEAVNVIEGHPRCPTLAVSGIDSTVKIFNTENTPPSGCSRNHTSNSYKIIATNEMNRQQGSRDSYITSRMLSHLAYRAHLDDGFGHEVLDTDACSIM.

WD repeat units lie at residues 43–82 (GHTGCVNTLDWSADGEFLLSGSDDTRLIVWDVFNEYKPRH), 87–128 (GHVQ…EGGM), 141–180 (CALDSVKNIVPCDNGHTFLVCSEDGTARQYDIREPHVCNQ), 193–233 (PYRI…KSFR), and 241–295 (SPEK…LFHV). The segment at 599-644 (SMYTGHSDLNDDDDDYQDEESYSYASDDDDESDEDSDEGPTLLSLR) is disordered. Residues 608-636 (NDDDDDYQDEESYSYASDDDDESDEDSDE) show a composition bias toward acidic residues. 2 WD repeats span residues 668–708 (CNVE…ILAI) and 711–750 (GDSEAVNVIEGHPRCPTLAVSGIDSTVKIFNTENTPPSGC).

In terms of assembly, interacts with ddb1.

The protein resides in the cytoplasm. In terms of biological role, ligand-dependent coactivator of nuclear receptors that may function as a substrate receptor for CUL4-DDB1 E3 ubiquitin-protein ligase complex. The chain is WD repeat protein iqw1 (iqw1) from Schizosaccharomyces pombe (strain 972 / ATCC 24843) (Fission yeast).